Reading from the N-terminus, the 213-residue chain is Putative manganese efflux pump MntP (213 aa).

Helical transmembrane passes span 3–23, 36–56, 67–87, 130–150, 152–172, and 187–207; these read ILSI…VSVA, ALKV…IGWG, AFDH…MIFE, LAIA…FLGI, IVQT…LGVI, and IVGG…HTGI.

It belongs to the MntP (TC 9.B.29) family.

It localises to the cell membrane. Its function is as follows. Probably functions as a manganese efflux pump. This chain is Putative manganese efflux pump MntP, found in Clostridium perfringens (strain 13 / Type A).